The sequence spans 336 residues: Ketol-acid reductoisomerase (NADP(+)) (336 aa).

A KARI N-terminal Rossmann domain is found at 1–182 (MAVIYYDKDA…GVTRAGVIET (182 aa)). NADP(+)-binding positions include 25-28 (YGSQ), Arg48, Ser51, Ser53, and 83-86 (DENQ). Residue His108 is part of the active site. NADP(+) is bound at residue Gly134. The KARI C-terminal knotted domain occupies 183 to 328 (TFKEETETDL…KELRKMMPWL (146 aa)). Mg(2+) contacts are provided by Asp191, Glu195, Glu227, and Glu231. Substrate is bound at residue Ser252.

It belongs to the ketol-acid reductoisomerase family. Mg(2+) serves as cofactor.

It carries out the reaction (2R)-2,3-dihydroxy-3-methylbutanoate + NADP(+) = (2S)-2-acetolactate + NADPH + H(+). The catalysed reaction is (2R,3R)-2,3-dihydroxy-3-methylpentanoate + NADP(+) = (S)-2-ethyl-2-hydroxy-3-oxobutanoate + NADPH + H(+). The protein operates within amino-acid biosynthesis; L-isoleucine biosynthesis; L-isoleucine from 2-oxobutanoate: step 2/4. It functions in the pathway amino-acid biosynthesis; L-valine biosynthesis; L-valine from pyruvate: step 2/4. Its function is as follows. Involved in the biosynthesis of branched-chain amino acids (BCAA). Catalyzes an alkyl-migration followed by a ketol-acid reduction of (S)-2-acetolactate (S2AL) to yield (R)-2,3-dihydroxy-isovalerate. In the isomerase reaction, S2AL is rearranged via a Mg-dependent methyl migration to produce 3-hydroxy-3-methyl-2-ketobutyrate (HMKB). In the reductase reaction, this 2-ketoacid undergoes a metal-dependent reduction by NADPH to yield (R)-2,3-dihydroxy-isovalerate. This Thermotoga petrophila (strain ATCC BAA-488 / DSM 13995 / JCM 10881 / RKU-1) protein is Ketol-acid reductoisomerase (NADP(+)).